We begin with the raw amino-acid sequence, 677 residues long: Protein hook (677 aa).

Residues 6–123 enclose the Calponin-homology (CH) domain; it reads NEMYYSLLEW…RLLQLVLGCA (118 aa). Coiled-coil stretches lie at residues 135-436 and 478-588; these read EIMC…KCGH and QTAL…AKEV.

Belongs to the hook family. Homodimer. Interacts with microtubules via its N-terminus.

It is found in the cytoplasm. The protein localises to the cytoskeleton. The protein resides in the endosome. It localises to the synapse. In terms of biological role, involved in endocytic trafficking by stabilizing organelles of the endocytic pathway. Probably acts as a cytoskeletal linker protein required to tether endosome vesicles to the cytoskeleton. Involved in modulation of endocytosis at stages required for down-regulation of membrane proteins that control synapse size. Not involved in synaptic vesicle recycling. Required in R7 cells for boss endocytosis into multivesicular bodies (MVBs). Has a role in regulating adult longevity. The chain is Protein hook from Drosophila persimilis (Fruit fly).